A 353-amino-acid chain; its full sequence is MAEKVNVCIVGSGNWGSAIAKIVGANAAALPEFEERVTMFVYEEMIDGKKLTEIINETHENVKYLKGHKLPTNVVAVPDLVEAAKNADILIFVVPHQFIPNFCKQLLGKIKPNAIAISLIKGFDKAEGGGIDLISHIITRHLKIPCAVLMGANLANEVAEGNFCETTIGCTDKKYGKVLRDLFQANHFRVVVVEDADAVEVCGALKNIVACGAGFVDGLKLGDNTKAAVIRLGLMEMIRFVDVFYPGSKLSTFFESCGVADLITTCYGGRNRRVSEAFVTSGKTIEDLEKEMLNGQKLQGPPTAEEVNYMLKNKGLEDKFPLFTAIHKICTNQLKPKDLIDCIRNHPEHMQTL.

Ala2 carries the blocked amino end (Ala) modification. NAD(+)-binding positions include 11 to 16 (GSGNWG), Phe98, Lys121, and Ala155. A substrate-binding site is contributed by Lys121. The active-site Proton acceptor is Lys206. The NAD(+) site is built by Arg270 and Gln299. Residue 270 to 271 (RN) participates in substrate binding.

It belongs to the NAD-dependent glycerol-3-phosphate dehydrogenase family. As to quaternary structure, homodimer.

The protein localises to the cytoplasm. The catalysed reaction is sn-glycerol 3-phosphate + NAD(+) = dihydroxyacetone phosphate + NADH + H(+). It participates in phospholipid metabolism; alpha-glycerophosphate cycle. The protein is Glycerol-3-phosphate dehydrogenase [NAD(+)], cytoplasmic of Drosophila virilis (Fruit fly).